We begin with the raw amino-acid sequence, 426 residues long: Divalent metal cation transporter MntH (426 aa).

10 consecutive transmembrane segments (helical) span residues 31-51, 58-78, 134-156, 169-189, 208-228, 256-276, 298-318, 337-357, 363-383, and 402-422; these read WYLLGPAFVAAIAYVDPGNVA, AQFGYLQLWVVVVANVLAGLV, ILFRVSLLLGGVITGTVSLLLLM, VITGLLFVIVVGFTSSFFVAT, SVLLAAAIIGATVMPHAVYLH, VILAMTIAGIVNTAMLLVAAI, LGATIAMLFAIGLLASSLASA, IPMLIRRLITLCPAIAILALG, ALVLSQIVLSFGIPFAVLPLV, and TVLGWAVAILVSLLNVVLIYL.

The protein belongs to the NRAMP family.

It localises to the cell membrane. Functionally, h(+)-stimulated, divalent metal cation uptake system. The chain is Divalent metal cation transporter MntH from Mycobacterium leprae (strain TN).